We begin with the raw amino-acid sequence, 196 residues long: Phosphate-specific transport system accessory protein PhoU homolog (196 aa).

This sequence belongs to the PhoU family. In terms of assembly, homodimer.

It localises to the cytoplasm. Its function is as follows. Plays a role in the regulation of phosphate uptake. The protein is Phosphate-specific transport system accessory protein PhoU homolog of Archaeoglobus fulgidus (strain ATCC 49558 / DSM 4304 / JCM 9628 / NBRC 100126 / VC-16).